Reading from the N-terminus, the 85-residue chain is Phosphocarrier protein HPr (85 aa).

The 85-residue stretch at 1 to 85 (MFQNQVKITA…HLSLIMTELE (85 aa)) folds into the HPr domain. His15 serves as the catalytic Pros-phosphohistidine intermediate.

It belongs to the HPr family.

Its subcellular location is the cytoplasm. Functionally, general (non sugar-specific) component of the phosphoenolpyruvate-dependent sugar phosphotransferase system (sugar PTS). This major carbohydrate active-transport system catalyzes the phosphorylation of incoming sugar substrates concomitantly with their translocation across the cell membrane. The phosphoryl group from phosphoenolpyruvate (PEP) is transferred to the phosphoryl carrier protein HPr by enzyme I. Phospho-HPr then transfers it to the PTS EIIA domain. The polypeptide is Phosphocarrier protein HPr (ptsH) (Buchnera aphidicola subsp. Acyrthosiphon pisum (strain APS) (Acyrthosiphon pisum symbiotic bacterium)).